Here is an 831-residue protein sequence, read N- to C-terminus: Multiphosphoryl transfer protein (831 aa).

The HPr domain maps to 1-90 (MLTIQFLCPL…EYILVRFIDS (90 aa)). His-15 (pros-phosphohistidine intermediate; for HPr activity) is an active-site residue. A Phosphohistidine; by EI modification is found at His-15. Residues 119 to 650 (GNVLASGVGV…AVKSQLRQLD (532 aa)) are PTS EI. Catalysis depends on His-298, which acts as the Tele-phosphohistidine intermediate; for PTS EI activity. The residue at position 298 (His-298) is a Phosphohistidine; by autocatalysis. Phosphoenolpyruvate is bound by residues Arg-405 and Arg-441. Mg(2+)-binding residues include Glu-540 and Asp-564. Residues 563 to 564 (ND) and Arg-574 contribute to the phosphoenolpyruvate site. Catalysis depends on Cys-611, which acts as the Proton donor; for EI activity. In terms of domain architecture, PTS EIIA type-2 spans 685–828 (PLLALENIFV…QSILTLLETE (144 aa)). His-747 acts as the Tele-phosphohistidine intermediate; for PTS EIIA activity in catalysis. The residue at position 747 (His-747) is a Phosphohistidine; by HPr.

Belongs to the PEP-utilizing enzyme family. Mg(2+) is required as a cofactor.

The protein resides in the cytoplasm. The enzyme catalyses L-histidyl-[protein] + phosphoenolpyruvate = N(pros)-phospho-L-histidyl-[protein] + pyruvate. The catalysed reaction is D-fructose(out) + N(pros)-phospho-L-histidyl-[protein] = D-fructose 1-phosphate(in) + L-histidyl-[protein]. Its function is as follows. Multifunctional protein that includes general (non sugar-specific) and sugar-specific components of the phosphoenolpyruvate-dependent sugar phosphotransferase system (sugar PTS). This major carbohydrate active transport system catalyzes the phosphorylation of incoming sugar substrates concomitantly with their translocation across the cell membrane. The enzyme II FryABC PTS system is involved in fructose transport. The protein is Multiphosphoryl transfer protein (fryA) of Shigella flexneri.